The following is an 848-amino-acid chain: DNA mismatch repair protein MutS (848 aa).

An ATP-binding site is contributed by 605 to 612 (GPNMAGKS).

Belongs to the DNA mismatch repair MutS family.

In terms of biological role, this protein is involved in the repair of mismatches in DNA. It is possible that it carries out the mismatch recognition step. This protein has a weak ATPase activity. This chain is DNA mismatch repair protein MutS, found in Leptospira interrogans serogroup Icterohaemorrhagiae serovar Lai (strain 56601).